Reading from the N-terminus, the 137-residue chain is Large ribosomal subunit protein uL16 (137 aa).

The protein belongs to the universal ribosomal protein uL16 family. As to quaternary structure, part of the 50S ribosomal subunit.

Functionally, binds 23S rRNA and is also seen to make contacts with the A and possibly P site tRNAs. The polypeptide is Large ribosomal subunit protein uL16 (Paracoccus denitrificans (strain Pd 1222)).